Here is a 626-residue protein sequence, read N- to C-terminus: Extracellular metalloproteinase 1 (626 aa).

The signal sequence occupies residues 1-17 (MLSSLLAGAGLVALAAS). The propeptide occupies 18-241 (HPTSHGNALT…IHGVVDYSAD (224 aa)). A glycan (N-linked (GlcNAc...) asparagine) is linked at Asn-315. His-425 contacts Zn(2+). Glu-426 is an active-site residue. His-429 contacts Zn(2+). The interval 606–626 (GSGARYSSTARTGSTALPSGC) is disordered. Residues 610–626 (RYSSTARTGSTALPSGC) show a composition bias toward polar residues.

It belongs to the peptidase M36 family. Requires Zn(2+) as cofactor.

It localises to the secreted. In terms of biological role, secreted metalloproteinase that allows assimilation of proteinaceous substrates. The polypeptide is Extracellular metalloproteinase 1 (MEP1) (Phaeosphaeria nodorum (strain SN15 / ATCC MYA-4574 / FGSC 10173) (Glume blotch fungus)).